A 693-amino-acid polypeptide reads, in one-letter code: Cleavage and polyadenylation specificity factor subunit 3-I (693 aa).

An HXHXDH motif motif is present at residues 81–86; that stretch reads HFHIDH.

This sequence belongs to the metallo-beta-lactamase superfamily. RNA-metabolizing metallo-beta-lactamase-like family. INTS11 subfamily. As to quaternary structure, component of the CPSF complex, at least composed of CPSF160, CPSF100, CPSF73-I, CPSF73-II, CPSF30, FY and FIPS5. Interacts with CLPS3, CPSF100, CPSF160 and FY. In terms of tissue distribution, highly expressed in carpels. Also detected in seedlings, roots, stems, leaves, flowers and siliques.

The protein resides in the nucleus. In terms of biological role, component of the cleavage and polyadenylation specificity factor (CPSF) complex that play a key role in pre-mRNA 3'-end formation, recognizing the AAUAAA signal sequence and interacting with poly(A) polymerase and other factors to bring about cleavage and poly(A) addition. May function as mRNA 3'-end-processing endonuclease and also be involved in the histone 3'-end pre-mRNA processing. This chain is Cleavage and polyadenylation specificity factor subunit 3-I (CPSF73-I), found in Arabidopsis thaliana (Mouse-ear cress).